Reading from the N-terminus, the 64-residue chain is Large ribosomal subunit protein bL33 (64 aa).

The interval 19 to 40 is disordered; sequence TSTDPKRSNGVSRYTTEKNRRN.

Belongs to the bacterial ribosomal protein bL33 family.

The protein is Large ribosomal subunit protein bL33 of Prochlorococcus marinus (strain MIT 9215).